A 331-amino-acid chain; its full sequence is Glutaminase (331 aa).

Substrate contacts are provided by serine 77, asparagine 129, glutamate 173, asparagine 180, tyrosine 204, tyrosine 256, and valine 274.

This sequence belongs to the glutaminase family. As to quaternary structure, homotetramer.

It carries out the reaction L-glutamine + H2O = L-glutamate + NH4(+). The sequence is that of Glutaminase from Oceanobacillus iheyensis (strain DSM 14371 / CIP 107618 / JCM 11309 / KCTC 3954 / HTE831).